A 1142-amino-acid polypeptide reads, in one-letter code: Probable serine/threonine-protein kinase fhkB (1142 aa).

Residues 1–16 show a composition bias toward polar residues; it reads MSQDIQTQNSYSDELY. Disordered stretches follow at residues 1–359, 374–404, and 432–451; these read MSQD…RLSQ, NTHT…KKQQ, and QIIG…QPPV. 2 stretches are compositionally biased toward low complexity: residues 17–72 and 83–157; these read SSQI…FSQN and QNSY…PSSQ. A compositionally biased stretch (polar residues) spans 158-178; the sequence is KRFFQSQNDDFVPSSQVTSLQ. Residues 186-302 adopt a coiled-coil conformation; the sequence is IQQQQQQQQQ…DYEQENDDDD (117 aa). Residues 187-260 are compositionally biased toward low complexity; it reads QQQQQQQQQQ…QQTQQQQQQP (74 aa). 2 stretches are compositionally biased toward acidic residues: residues 261–277 and 283–325; these read QEDD…DNYE and EGEE…EEES. Low complexity predominate over residues 333 to 348; the sequence is RALQSRSSQSRPLLRS. The span at 374 to 397 shows a compositional bias: polar residues; the sequence is NTHTNQLGQSSQQTNSPNVHFNSL. Positions 393–434 form a coiled coil; sequence HFNSLQQKKKQQQQQQQQQQQQQQQQQQQQQQQQQQQSQQII. The segment covering 432 to 443 has biased composition (low complexity); it reads QIIGSQSSQSSQ. The FHA domain maps to 480–551; sequence IVVGRSSSCD…NGSYINGELI (72 aa). The 261-residue stretch at 625 to 885 folds into the Protein kinase domain; the sequence is YYFVKEIGSG…IKEALNHPWF (261 aa). Residues 631–639 and lysine 654 each bind ATP; that span reads IGSGGYGIV. Aspartate 747 serves as the catalytic Proton acceptor. The tract at residues 947–1142 is disordered; that stretch reads FDNNNNNNNN…HQQYTQHTTM (196 aa). Over residues 949 to 1034 the composition is skewed to low complexity; sequence NNNNNNNNNN…HNHNLNNHNH (86 aa). The segment covering 1035-1067 has biased composition (basic residues); sequence NNNHHHNHNHNHNHNHNHNHNHNHNHNHNHNHN. Low complexity predominate over residues 1068–1133; sequence NHNNNNNNNN…NNINNNNNYH (66 aa). A coiled-coil region spans residues 1090-1132; sequence NNNNNNNNNNNNNNNNNNNNYYNNNINNINNNINNNINNNNNY.

Belongs to the protein kinase superfamily. CAMK Ser/Thr protein kinase family. CHK2 subfamily.

The catalysed reaction is L-seryl-[protein] + ATP = O-phospho-L-seryl-[protein] + ADP + H(+). The enzyme catalyses L-threonyl-[protein] + ATP = O-phospho-L-threonyl-[protein] + ADP + H(+). This Dictyostelium discoideum (Social amoeba) protein is Probable serine/threonine-protein kinase fhkB (fhkB).